The following is a 190-amino-acid chain: UPF0301 protein Psyr_0485 (190 aa).

This sequence belongs to the UPF0301 (AlgH) family.

This chain is UPF0301 protein Psyr_0485, found in Pseudomonas syringae pv. syringae (strain B728a).